We begin with the raw amino-acid sequence, 572 residues long: Mitochondrial distribution and morphology protein 34 (572 aa).

The 195-residue stretch at 1-195 folds into the SMP-LTD domain; it reads MAFNFNWSPL…LPAIIHRLSL (195 aa). 4 disordered regions span residues 212–236, 321–426, 477–522, and 553–572; these read TASANGEGPGQDPLASPPQDPVDAL, VGSM…PDND, SATP…DNPT, and CGPFWDRHSQEESPPPAYGH. A compositionally biased stretch (low complexity) spans 330-348; it reads SASMVSSQSRSSTPSHTFS. A compositionally biased stretch (basic residues) spans 358–370; the sequence is RHSKAHARKRKKR. A compositionally biased stretch (basic and acidic residues) spans 371–381; it reads VVDLRRPKTTD. 2 stretches are compositionally biased toward polar residues: residues 387–400 and 500–511; these read SDESSFTESTSAPS and DSSAGSSRQLPS.

Belongs to the MDM34 family. As to quaternary structure, component of the ER-mitochondria encounter structure (ERMES) or MDM complex, composed of mmm1, mdm10, mdm12 and mdm34.

The protein localises to the mitochondrion outer membrane. Component of the ERMES/MDM complex, which serves as a molecular tether to connect the endoplasmic reticulum (ER) and mitochondria. Components of this complex are involved in the control of mitochondrial shape and protein biogenesis, and function in nonvesicular lipid trafficking between the ER and mitochondria. Mdm34 is required for the interaction of the ER-resident membrane protein mmm1 and the outer mitochondrial membrane-resident beta-barrel protein mdm10. The chain is Mitochondrial distribution and morphology protein 34 from Aspergillus fumigatus (strain CBS 144.89 / FGSC A1163 / CEA10) (Neosartorya fumigata).